Consider the following 405-residue polypeptide: Probable tRNA sulfurtransferase (405 aa).

The 106-residue stretch at 60-165 (DQVMARLSQV…REAIYLSTKT (106 aa)) folds into the THUMP domain. Residues 183–184 (ML), 208–209 (HF), Arg-265, Gly-287, and Gln-296 contribute to the ATP site.

This sequence belongs to the ThiI family.

Its subcellular location is the cytoplasm. It carries out the reaction [ThiI sulfur-carrier protein]-S-sulfanyl-L-cysteine + a uridine in tRNA + 2 reduced [2Fe-2S]-[ferredoxin] + ATP + H(+) = [ThiI sulfur-carrier protein]-L-cysteine + a 4-thiouridine in tRNA + 2 oxidized [2Fe-2S]-[ferredoxin] + AMP + diphosphate. It catalyses the reaction [ThiS sulfur-carrier protein]-C-terminal Gly-Gly-AMP + S-sulfanyl-L-cysteinyl-[cysteine desulfurase] + AH2 = [ThiS sulfur-carrier protein]-C-terminal-Gly-aminoethanethioate + L-cysteinyl-[cysteine desulfurase] + A + AMP + 2 H(+). The protein operates within cofactor biosynthesis; thiamine diphosphate biosynthesis. Catalyzes the ATP-dependent transfer of a sulfur to tRNA to produce 4-thiouridine in position 8 of tRNAs, which functions as a near-UV photosensor. Also catalyzes the transfer of sulfur to the sulfur carrier protein ThiS, forming ThiS-thiocarboxylate. This is a step in the synthesis of thiazole, in the thiamine biosynthesis pathway. The sulfur is donated as persulfide by IscS. The protein is Probable tRNA sulfurtransferase of Lacticaseibacillus paracasei (strain ATCC 334 / BCRC 17002 / CCUG 31169 / CIP 107868 / KCTC 3260 / NRRL B-441) (Lactobacillus paracasei).